A 66-amino-acid polypeptide reads, in one-letter code: Gallinacin-5 (66 aa).

Positions 1-19 are cleaved as a signal peptide; sequence MQILTLLFAVLLLMLRAEP. Positions 20–25 are excised as a propeptide; sequence GLSLAR. 3 cysteine pairs are disulfide-bonded: cysteine 31–cysteine 59, cysteine 38–cysteine 53, and cysteine 43–cysteine 60.

The protein belongs to the beta-defensin family. As to expression, strong expression in the tongue and bone marrow. Low expression in the esophagus, trachea, lung, brain and ovary. Expressed in the ovarian stroma, but not in the ovarian follicles.

The protein resides in the secreted. The protein localises to the cytoplasmic granule. Has bactericidal activity. The sequence is that of Gallinacin-5 (GAL5) from Gallus gallus (Chicken).